Reading from the N-terminus, the 381-residue chain is 3-hydroxyisobutyryl-CoA hydrolase, mitochondrial (381 aa).

The transit peptide at 1-25 (MDRLLTISNHIGKNIRQFSTSTEEV) directs the protein to the mitochondrion. Substrate-binding residues include E116, G141, E164, and D172.

It belongs to the enoyl-CoA hydratase/isomerase family.

Its subcellular location is the mitochondrion. It catalyses the reaction 3-hydroxy-2-methylpropanoyl-CoA + H2O = 3-hydroxy-2-methylpropanoate + CoA + H(+). Its pathway is amino-acid degradation; L-valine degradation. Its function is as follows. Hydrolyzes 3-hydroxyisobutyryl-CoA (HIBYL-CoA), a saline catabolite. This Dictyostelium discoideum (Social amoeba) protein is 3-hydroxyisobutyryl-CoA hydrolase, mitochondrial (hibch).